A 394-amino-acid chain; its full sequence is Elongation factor Tu 1 (394 aa).

Residues Lys10–Glu204 enclose the tr-type G domain. Residues Gly19–Thr26 are G1. Residue Gly19 to Thr26 participates in GTP binding. Thr26 serves as a coordination point for Mg(2+). The interval Gly60 to Asn64 is G2. The interval Asp81–Gly84 is G3. Residues Asp81–His85 and Asn136–Asp139 each bind GTP. A G4 region spans residues Asn136–Asp139. The segment at Ser174–Leu176 is G5.

Belongs to the TRAFAC class translation factor GTPase superfamily. Classic translation factor GTPase family. EF-Tu/EF-1A subfamily. In terms of assembly, monomer.

It is found in the cytoplasm. The enzyme catalyses GTP + H2O = GDP + phosphate + H(+). In terms of biological role, GTP hydrolase that promotes the GTP-dependent binding of aminoacyl-tRNA to the A-site of ribosomes during protein biosynthesis. The polypeptide is Elongation factor Tu 1 (Yersinia enterocolitica serotype O:8 / biotype 1B (strain NCTC 13174 / 8081)).